Consider the following 391-residue polypeptide: Mannose-6-phosphate isomerase (391 aa).

Residues Q97, H99, E134, and H255 each contribute to the Zn(2+) site. R274 is a catalytic residue. K280 is modified (N6-acetyllysine).

It belongs to the mannose-6-phosphate isomerase type 1 family. It depends on Zn(2+) as a cofactor.

The protein resides in the cytoplasm. The catalysed reaction is D-mannose 6-phosphate = D-fructose 6-phosphate. In terms of biological role, involved in the conversion of glucose to GDP-L-fucose, which can be converted to L-fucose, a capsular polysaccharide. In Shigella flexneri, this protein is Mannose-6-phosphate isomerase (manA).